We begin with the raw amino-acid sequence, 112 residues long: Protein ORF1 (112 aa).

Residues M1–G10 show a composition bias toward low complexity. The tract at residues M1–G20 is disordered. Residues I51–C71 traverse the membrane as a helical segment.

It is found in the host membrane. This is Protein ORF1 from Snake adenovirus serotype 1 (SnAdV-1).